The chain runs to 201 residues: Ribosomal RNA large subunit methyltransferase E (201 aa).

Positions 49, 51, 69, 87, and 111 each coordinate S-adenosyl-L-methionine. Lys-151 functions as the Proton acceptor in the catalytic mechanism.

Belongs to the class I-like SAM-binding methyltransferase superfamily. RNA methyltransferase RlmE family.

Its subcellular location is the cytoplasm. It catalyses the reaction uridine(2552) in 23S rRNA + S-adenosyl-L-methionine = 2'-O-methyluridine(2552) in 23S rRNA + S-adenosyl-L-homocysteine + H(+). Its function is as follows. Specifically methylates the uridine in position 2552 of 23S rRNA at the 2'-O position of the ribose in the fully assembled 50S ribosomal subunit. This is Ribosomal RNA large subunit methyltransferase E from Nitratidesulfovibrio vulgaris (strain DSM 19637 / Miyazaki F) (Desulfovibrio vulgaris).